Consider the following 381-residue polypeptide: GDP-mannose-dependent alpha-(1-6)-phosphatidylinositol dimannoside mannosyltransferase (381 aa).

Substrate is bound by residues glycine 16, arginine 207, 211–212 (EK), 283–287 (ETFGL), and glutamate 291.

This sequence belongs to the glycosyltransferase group 1 family. Glycosyltransferase 4 subfamily.

It participates in phospholipid metabolism; phosphatidylinositol metabolism. In terms of biological role, catalyzes the addition of a mannose residue from GDP-D-mannose to the position 6 of the alpha-1,6-linked mannose residue of the triacyl phosphatidylinositol dimannoside (Ac3PIM2) to generate triacyl phosphatidylinositol trimannoside (Ac3PIM3). This Mycobacterium tuberculosis (strain ATCC 25177 / H37Ra) protein is GDP-mannose-dependent alpha-(1-6)-phosphatidylinositol dimannoside mannosyltransferase (pimC).